The primary structure comprises 1577 residues: Pentafunctional AROM polypeptide (1577 aa).

Residues 1-392 (MASVGLEKVN…YGTSAHVVSD (392 aa)) are 3-dehydroquinate synthase. Residues 80–83 (ETYK), 111–113 (GGV), and Asp-116 each bind NAD(+). Position 127 (Arg-127) interacts with 7-phospho-2-dehydro-3-deoxy-D-arabino-heptonate. 136-137 (TS) provides a ligand contact to NAD(+). Asp-143 and Lys-149 together coordinate 7-phospho-2-dehydro-3-deoxy-D-arabino-heptonate. Lys-158 serves as a coordination point for NAD(+). Asn-159 is a binding site for 7-phospho-2-dehydro-3-deoxy-D-arabino-heptonate. NAD(+) is bound by residues 176-179 (WLET) and Asn-187. Glu-191 is a binding site for Zn(2+). 7-phospho-2-dehydro-3-deoxy-D-arabino-heptonate contacts are provided by residues 191-194 (EVIK) and Lys-258. The active-site Proton acceptor; for 3-dehydroquinate synthase activity is Glu-268. 7-phospho-2-dehydro-3-deoxy-D-arabino-heptonate-binding positions include 272-276 (RNLLN) and His-279. His-279 contacts Zn(2+). His-283 serves as the catalytic Proton acceptor; for 3-dehydroquinate synthase activity. Residues His-295 and Lys-364 each contribute to the 7-phospho-2-dehydro-3-deoxy-D-arabino-heptonate site. His-295 is a Zn(2+) binding site. An EPSP synthase region spans residues 405–863 (VYPFTDVRSS…WDVLHSRLGA (459 aa)). The active-site For EPSP synthase activity is the Cys-845. A shikimate kinase region spans residues 882–1071 (VVLIGMRAAG…VPVKRSTFVC (190 aa)). Residue 886 to 893 (GMRAAGKS) coordinates ATP. The 3-dehydroquinase stretch occupies residues 1072 to 1284 (LTFQNLLPEM…AAPGQLTLRQ (213 aa)). Catalysis depends on His-1189, which acts as the Proton acceptor; for 3-dehydroquinate dehydratase activity. Lys-1218 serves as the catalytic Schiff-base intermediate with substrate; for 3-dehydroquinate dehydratase activity. A shikimate dehydrogenase region spans residues 1297-1577 (PKKMFVVGSP…APVYDAVTQE (281 aa)).

In the N-terminal section; belongs to the sugar phosphate cyclases superfamily. Dehydroquinate synthase family. It in the 2nd section; belongs to the EPSP synthase family. This sequence in the 3rd section; belongs to the shikimate kinase family. The protein in the 4th section; belongs to the type-I 3-dehydroquinase family. In the C-terminal section; belongs to the shikimate dehydrogenase family. In terms of assembly, homodimer. Zn(2+) serves as cofactor.

It is found in the cytoplasm. It carries out the reaction 7-phospho-2-dehydro-3-deoxy-D-arabino-heptonate = 3-dehydroquinate + phosphate. The catalysed reaction is 3-dehydroquinate = 3-dehydroshikimate + H2O. The enzyme catalyses shikimate + NADP(+) = 3-dehydroshikimate + NADPH + H(+). It catalyses the reaction shikimate + ATP = 3-phosphoshikimate + ADP + H(+). It carries out the reaction 3-phosphoshikimate + phosphoenolpyruvate = 5-O-(1-carboxyvinyl)-3-phosphoshikimate + phosphate. It functions in the pathway metabolic intermediate biosynthesis; chorismate biosynthesis; chorismate from D-erythrose 4-phosphate and phosphoenolpyruvate: step 2/7. It participates in metabolic intermediate biosynthesis; chorismate biosynthesis; chorismate from D-erythrose 4-phosphate and phosphoenolpyruvate: step 3/7. Its pathway is metabolic intermediate biosynthesis; chorismate biosynthesis; chorismate from D-erythrose 4-phosphate and phosphoenolpyruvate: step 4/7. The protein operates within metabolic intermediate biosynthesis; chorismate biosynthesis; chorismate from D-erythrose 4-phosphate and phosphoenolpyruvate: step 5/7. It functions in the pathway metabolic intermediate biosynthesis; chorismate biosynthesis; chorismate from D-erythrose 4-phosphate and phosphoenolpyruvate: step 6/7. In terms of biological role, the AROM polypeptide catalyzes 5 consecutive enzymatic reactions in prechorismate polyaromatic amino acid biosynthesis. The sequence is that of Pentafunctional AROM polypeptide from Eremothecium gossypii (strain ATCC 10895 / CBS 109.51 / FGSC 9923 / NRRL Y-1056) (Yeast).